The following is an 881-amino-acid chain: Probable alpha/beta-glucosidase agdC (881 aa).

The first 14 residues, 1–14 (MLRSLLLLAPLVGA), serve as a signal peptide directing secretion. Residues Asn171, Asn293, and Asn373 are each glycosylated (N-linked (GlcNAc...) asparagine). The active-site Nucleophile is Asp422. Residue Glu425 is part of the active site. The interval 440–485 (YSRDNDLPPAAPPVRPSNPRPLPGFPGDFQPSSSSKRSTKGSKVGL) is disordered. Residues 448-463 (PAAPPVRPSNPRPLPG) show a composition bias toward pro residues. An N-linked (GlcNAc...) asparagine glycan is attached at Asn506. Asp571 (proton donor) is an active-site residue. N-linked (GlcNAc...) asparagine glycans are attached at residues Asn572, Asn608, and Asn742.

The protein belongs to the glycosyl hydrolase 31 family.

It localises to the secreted. It carries out the reaction Hydrolysis of terminal, non-reducing (1-&gt;4)-linked alpha-D-glucose residues with release of alpha-D-glucose.. The enzyme catalyses Hydrolysis of terminal, non-reducing beta-D-glucosyl residues with release of beta-D-glucose.. Functionally, glucosidase involved in the degradation of cellulosic biomass. Has both alpha- and beta-glucosidase activity. This is Probable alpha/beta-glucosidase agdC (agdC) from Neosartorya fischeri (strain ATCC 1020 / DSM 3700 / CBS 544.65 / FGSC A1164 / JCM 1740 / NRRL 181 / WB 181) (Aspergillus fischerianus).